A 1463-amino-acid polypeptide reads, in one-letter code: Gag-Pol polyprotein (1463 aa).

Glycine 2 carries N-myristoyl glycine; by host lipidation. Residues 7–31 (VLRGKKADELEKIRLRPGGKKKYRL) form an interaction with Gp41 region. Residues 16–22 (LEKIRLR) carry the Nuclear export signal motif. Positions 26 to 32 (KKKYRLK) match the Nuclear localization signal motif. The tract at residues 112–138 (TKTTEKMPSTSRPTAPPSGNGGNFPVQ) is disordered. The interaction with human PPIA/CYPA and NUP153 stretch occupies residues 191–228 (NCVGDHQAAMQIIREIINEEAADWDAQHPIPGPLPAGQ). The interval 279–365 (YNPTNILDIK…GGPGQKARLM (87 aa)) is dimerization/Multimerization of capsid protein p24. 2 CCHC-type zinc fingers span residues 389–406 (IKCW…QCRA) and 410–427 (QGCW…KCPE). Positions 441-508 (EAPQFPCGPN…TRDTMQRDDR (68 aa)) are disordered. A compositionally biased stretch (basic and acidic residues) spans 462-508 (RPSRGPTREVHAAREKAERAEREAIQRSDRGLPAARETRDTMQRDDR). The dimerization of protease stretch occupies residues 513–517 (PQFSL). The 70-residue stretch at 532–601 (VEVLLDTGAD…TPINIFGRNI (70 aa)) folds into the Peptidase A2 domain. Residue aspartate 537 is the For protease activity; shared with dimeric partner of the active site. Dimerization of protease regions lie at residues 561–567 (GIGGFIN) and 600–612 (NILT…LNLP). The Reverse transcriptase domain occupies 655 to 845 (EGQLEEAPPT…PPYQWMGYEL (191 aa)). Mg(2+)-binding residues include aspartate 721, aspartate 796, and aspartate 797. The tract at residues 838–846 (YQWMGYELW) is RT 'primer grip'. The Tryptophan repeat motif signature appears at 1008 to 1024 (WEQWWDNYWQVTWIPDW). Residues 1044–1167 (ILGAETFYTD…VDHLVSQGIR (124 aa)) form the RNase H type-1 domain. Residues aspartate 1053, glutamate 1088, aspartate 1108, and aspartate 1159 each contribute to the Mg(2+) site. An Integrase-type zinc finger spans residues 1173-1214 (EKIEPAQEEHEKYHSNVKELSHKFGLPKLVARQIVNTCTQCQ). 4 residues coordinate Zn(2+): histidine 1182, histidine 1186, cysteine 1210, and cysteine 1213. The 152-residue stretch at 1223 to 1374 (QVNAELGTWQ…TPAERLINMV (152 aa)) folds into the Integrase catalytic domain. Aspartate 1234, aspartate 1286, and glutamate 1322 together coordinate Mg(2+). The segment at residues 1393 to 1440 (FRVYFREGRDQLWKGPGELLWKGDGAVIVKVGADIKIIPRRKAKIIKD) is a DNA-binding region (integrase-type).

Homotrimer; further assembles as hexamers of trimers. Interacts with gp41 (via C-terminus). Interacts with host CALM1; this interaction induces a conformational change in the Matrix protein, triggering exposure of the myristate group. Interacts with host AP3D1; this interaction allows the polyprotein trafficking to multivesicular bodies during virus assembly. Part of the pre-integration complex (PIC) which is composed of viral genome, matrix protein, Vpr and integrase. As to quaternary structure, homodimer; the homodimer further multimerizes as homohexamers or homopentamers. Interacts with human PPIA/CYPA. Interacts with human NUP153. Interacts with host PDZD8; this interaction stabilizes the capsid. Interacts with monkey TRIM5; this interaction destabilizes the capsid. In terms of assembly, homodimer, whose active site consists of two apposed aspartic acid residues. Heterodimer of p66 RT and p51 RT (RT p66/p51). Heterodimerization of RT is essential for DNA polymerase activity. The overall folding of the subdomains is similar in p66 RT and p51 RT but the spatial arrangements of the subdomains are dramatically different. As to quaternary structure, homotetramer; may further associate as a homohexadecamer. Part of the pre-integration complex (PIC) which is composed of viral genome, matrix protein, Vpr and integrase. Interacts with human SMARCB1/INI1 and human PSIP1/LEDGF isoform 1. Interacts with human KPNA3; this interaction might play a role in nuclear import of the pre-integration complex. Interacts with human NUP153; this interaction might play a role in nuclear import of the pre-integration complex. Mg(2+) serves as cofactor. Post-translationally, specific enzymatic cleavages by the viral protease yield mature proteins. The protease is released by autocatalytic cleavage. The polyprotein is cleaved during and after budding, this process is termed maturation. Proteolytic cleavage of p66 RT removes the RNase H domain to yield the p51 RT subunit. Nucleocapsid protein p7 might be further cleaved after virus entry.

It is found in the host cell membrane. It localises to the host endosome. The protein localises to the host multivesicular body. Its subcellular location is the virion membrane. The protein resides in the host nucleus. It is found in the host cytoplasm. It localises to the virion. It carries out the reaction Endopeptidase for which the P1 residue is preferably hydrophobic.. It catalyses the reaction Endohydrolysis of RNA in RNA/DNA hybrids. Three different cleavage modes: 1. sequence-specific internal cleavage of RNA. Human immunodeficiency virus type 1 and Moloney murine leukemia virus enzymes prefer to cleave the RNA strand one nucleotide away from the RNA-DNA junction. 2. RNA 5'-end directed cleavage 13-19 nucleotides from the RNA end. 3. DNA 3'-end directed cleavage 15-20 nucleotides away from the primer terminus.. The enzyme catalyses 3'-end directed exonucleolytic cleavage of viral RNA-DNA hybrid.. The catalysed reaction is DNA(n) + a 2'-deoxyribonucleoside 5'-triphosphate = DNA(n+1) + diphosphate. Its activity is regulated as follows. Protease: The viral protease is inhibited by many synthetic protease inhibitors (PIs), such as amprenavir, atazanavir, indinavir, loprinavir, nelfinavir, ritonavir and saquinavir. Use of protease inhibitors in tritherapy regimens permit more ambitious therapeutic strategies. Reverse transcriptase/ribonuclease H: RT can be inhibited either by nucleoside RT inhibitors (NRTIs) or by non nucleoside RT inhibitors (NNRTIs). NRTIs act as chain terminators, whereas NNRTIs inhibit DNA polymerization by binding a small hydrophobic pocket near the RT active site and inducing an allosteric change in this region. Classical NRTIs are abacavir, adefovir (PMEA), didanosine (ddI), lamivudine (3TC), stavudine (d4T), tenofovir (PMPA), zalcitabine (ddC), and zidovudine (AZT). Classical NNRTIs are atevirdine (BHAP U-87201E), delavirdine, efavirenz (DMP-266), emivirine (I-EBU), and nevirapine (BI-RG-587). The tritherapies used as a basic effective treatment of AIDS associate two NRTIs and one NNRTI. Mediates, with Gag polyprotein, the essential events in virion assembly, including binding the plasma membrane, making the protein-protein interactions necessary to create spherical particles, recruiting the viral Env proteins, and packaging the genomic RNA via direct interactions with the RNA packaging sequence (Psi). Gag-Pol polyprotein may regulate its own translation, by the binding genomic RNA in the 5'-UTR. At low concentration, the polyprotein would promote translation, whereas at high concentration, the polyprotein would encapsidate genomic RNA and then shut off translation. Functionally, targets the polyprotein to the plasma membrane via a multipartite membrane-binding signal, that includes its myristoylated N-terminus. Matrix protein is part of the pre-integration complex. Implicated in the release from host cell mediated by Vpu. Binds to RNA. Its function is as follows. Forms the conical core that encapsulates the genomic RNA-nucleocapsid complex in the virion. Most core are conical, with only 7% tubular. The core is constituted by capsid protein hexamer subunits. The core is disassembled soon after virion entry. Host restriction factors such as TRIM5-alpha or TRIMCyp bind retroviral capsids and cause premature capsid disassembly, leading to blocks in reverse transcription. Capsid restriction by TRIM5 is one of the factors which restricts HIV-1 to the human species. Host PIN1 apparently facilitates the virion uncoating. On the other hand, interactions with PDZD8 or CYPA stabilize the capsid. In terms of biological role, encapsulates and protects viral dimeric unspliced genomic RNA (gRNA). Binds these RNAs through its zinc fingers. Acts as a nucleic acid chaperone which is involved in rearangement of nucleic acid secondary structure during gRNA retrotranscription. Also facilitates template switch leading to recombination. As part of the polyprotein, participates in gRNA dimerization, packaging, tRNA incorporation and virion assembly. Aspartyl protease that mediates proteolytic cleavages of Gag and Gag-Pol polyproteins during or shortly after the release of the virion from the plasma membrane. Cleavages take place as an ordered, step-wise cascade to yield mature proteins. This process is called maturation. Displays maximal activity during the budding process just prior to particle release from the cell. Also cleaves Nef and Vif, probably concomitantly with viral structural proteins on maturation of virus particles. Hydrolyzes host EIF4GI and PABP1 in order to shut off the capped cellular mRNA translation. The resulting inhibition of cellular protein synthesis serves to ensure maximal viral gene expression and to evade host immune response. Functionally, multifunctional enzyme that converts the viral RNA genome into dsDNA in the cytoplasm, shortly after virus entry into the cell. This enzyme displays a DNA polymerase activity that can copy either DNA or RNA templates, and a ribonuclease H (RNase H) activity that cleaves the RNA strand of RNA-DNA heteroduplexes in a partially processive 3' to 5' endonucleasic mode. Conversion of viral genomic RNA into dsDNA requires many steps. A tRNA(3)-Lys binds to the primer-binding site (PBS) situated at the 5'-end of the viral RNA. RT uses the 3' end of the tRNA primer to perform a short round of RNA-dependent minus-strand DNA synthesis. The reading proceeds through the U5 region and ends after the repeated (R) region which is present at both ends of viral RNA. The portion of the RNA-DNA heteroduplex is digested by the RNase H, resulting in a ssDNA product attached to the tRNA primer. This ssDNA/tRNA hybridizes with the identical R region situated at the 3' end of viral RNA. This template exchange, known as minus-strand DNA strong stop transfer, can be either intra- or intermolecular. RT uses the 3' end of this newly synthesized short ssDNA to perform the RNA-dependent minus-strand DNA synthesis of the whole template. RNase H digests the RNA template except for two polypurine tracts (PPTs) situated at the 5'-end and near the center of the genome. It is not clear if both polymerase and RNase H activities are simultaneous. RNase H probably can proceed both in a polymerase-dependent (RNA cut into small fragments by the same RT performing DNA synthesis) and a polymerase-independent mode (cleavage of remaining RNA fragments by free RTs). Secondly, RT performs DNA-directed plus-strand DNA synthesis using the PPTs that have not been removed by RNase H as primers. PPTs and tRNA primers are then removed by RNase H. The 3' and 5' ssDNA PBS regions hybridize to form a circular dsDNA intermediate. Strand displacement synthesis by RT to the PBS and PPT ends produces a blunt ended, linear dsDNA copy of the viral genome that includes long terminal repeats (LTRs) at both ends. Its function is as follows. Catalyzes viral DNA integration into the host chromosome, by performing a series of DNA cutting and joining reactions. This enzyme activity takes place after virion entry into a cell and reverse transcription of the RNA genome in dsDNA. The first step in the integration process is 3' processing. This step requires a complex comprising the viral genome, matrix protein, Vpr and integrase. This complex is called the pre-integration complex (PIC). The integrase protein removes 2 nucleotides from each 3' end of the viral DNA, leaving recessed CA OH's at the 3' ends. In the second step, the PIC enters cell nucleus. This process is mediated through integrase and Vpr proteins, and allows the virus to infect a non dividing cell. This ability to enter the nucleus is specific of lentiviruses, other retroviruses cannot and rely on cell division to access cell chromosomes. In the third step, termed strand transfer, the integrase protein joins the previously processed 3' ends to the 5' ends of strands of target cellular DNA at the site of integration. The 5'-ends are produced by integrase-catalyzed staggered cuts, 5 bp apart. A Y-shaped, gapped, recombination intermediate results, with the 5'-ends of the viral DNA strands and the 3' ends of target DNA strands remaining unjoined, flanking a gap of 5 bp. The last step is viral DNA integration into host chromosome. This involves host DNA repair synthesis in which the 5 bp gaps between the unjoined strands are filled in and then ligated. Since this process occurs at both cuts flanking the HIV genome, a 5 bp duplication of host DNA is produced at the ends of HIV-1 integration. Alternatively, Integrase may catalyze the excision of viral DNA just after strand transfer, this is termed disintegration. This is Gag-Pol polyprotein (gag-pol) from Human immunodeficiency virus type 2 subtype A (isolate ST) (HIV-2).